Reading from the N-terminus, the 221-residue chain is Pyridoxal phosphate homeostasis protein (221 aa).

Lys-26 is subject to N6-(pyridoxal phosphate)lysine.

The protein belongs to the pyridoxal phosphate-binding protein YggS/PROSC family.

Functionally, pyridoxal 5'-phosphate (PLP)-binding protein, which is involved in PLP homeostasis. In Corynebacterium glutamicum (strain ATCC 13032 / DSM 20300 / JCM 1318 / BCRC 11384 / CCUG 27702 / LMG 3730 / NBRC 12168 / NCIMB 10025 / NRRL B-2784 / 534), this protein is Pyridoxal phosphate homeostasis protein.